Here is an 81-residue protein sequence, read N- to C-terminus: Cytotoxin 3a (81 aa).

The signal sequence occupies residues 1–21 (MKTLLLTLVVVTIVCLDLGYT). 4 disulfides stabilise this stretch: Cys-24–Cys-42, Cys-35–Cys-59, Cys-63–Cys-74, and Cys-75–Cys-80.

This sequence belongs to the three-finger toxin family. Short-chain subfamily. Type IA cytotoxin sub-subfamily. In terms of assembly, monomer in solution; Homodimer and oligomer in the presence of negatively charged lipids forming a pore with a size ranging between 20 and 30 Angstroms. As to expression, expressed by the venom gland.

The protein resides in the secreted. It is found in the target cell membrane. In terms of biological role, shows cytolytic activity on many different cells by forming pore in lipid membranes. In vivo, increases heart rate or kills the animal by cardiac arrest. In addition, it binds to heparin with high affinity, interacts with Kv channel-interacting protein 1 (KCNIP1) in a calcium-independent manner, and binds to integrin alpha-V/beta-3 (ITGAV/ITGB3) with moderate affinity. In Naja atra (Chinese cobra), this protein is Cytotoxin 3a.